We begin with the raw amino-acid sequence, 329 residues long: Prostaglandin reductase 1 (329 aa).

Thr18 carries the phosphothreonine modification. Ser20 is modified (phosphoserine). NADP(+) contacts are provided by residues 152–155, Lys178, Tyr193, Asn217, 239–245, 270–272, and Asn321; these read GAVG, CGAISVY, and FVV. Lys178 carries the post-translational modification N6-(2-hydroxyisobutyryl)lysine; alternate. An N6-acetyllysine; alternate modification is found at Lys178.

The protein belongs to the NADP-dependent oxidoreductase L4BD family. As to quaternary structure, monomer or homodimer.

The protein resides in the cytoplasm. It carries out the reaction 13,14-dihydro-15-oxo-prostaglandin E1 + NADP(+) = 15-oxoprostaglandin E1 + NADPH + H(+). The enzyme catalyses 13,14-dihydro-15-oxo-prostaglandin E2 + NADP(+) = 15-oxoprostaglandin E2 + NADPH + H(+). The catalysed reaction is 13,14-dihydro-15-oxo-prostaglandin F1alpha + NADP(+) = 15-oxoprostaglandin F1alpha + NADPH + H(+). It catalyses the reaction 13,14-dihydro-15-oxo-PGF2alpha + NADP(+) = 15-oxoprostaglandin F2alpha + NADPH + H(+). It carries out the reaction leukotriene B4 + NADP(+) = 12-oxo-leukotriene B4 + NADPH + H(+). The enzyme catalyses 20-hydroxy-leukotriene B4 + NADP(+) = 12-oxo-20-hydroxy-leukotriene B4 + NADPH + H(+). The catalysed reaction is 6-trans-leukotriene B4 + NADP(+) = 12-oxo-(5S)-hydroxy-(6E,8E,10E,14Z)-eicosatetraenoate + NADPH + H(+). It catalyses the reaction (5S,12S)-dihydroxy-(6E,10E,12E,14Z)-eicosatetraenoate + NADP(+) = 12-oxo-(5S)-hydroxy-(6E,8E,10E,14Z)-eicosatetraenoate + NADPH + H(+). It carries out the reaction an n-alkanal + NADP(+) = an alk-2-enal + NADPH + H(+). The enzyme catalyses hexanal + NADP(+) = (E)-hex-2-enal + NADPH + H(+). The catalysed reaction is octanal + NADP(+) = (2E)-octenal + NADPH + H(+). It catalyses the reaction decanal + NADP(+) = (2E)-decenal + NADPH + H(+). It carries out the reaction dodecanal + NADP(+) = (2E)-dodecenal + NADPH + H(+). The enzyme catalyses 4-hydroxynonanal + NADP(+) = (E)-4-hydroxynon-2-enal + NADPH + H(+). The catalysed reaction is pentan-2-one + NADP(+) = (E)-pent-3-en-2-one + NADPH + H(+). It catalyses the reaction nonan-2-one + NADP(+) = (3E)-nonen-2-one + NADPH + H(+). In terms of biological role, NAD(P)H-dependent oxidoreductase involved in metabolic inactivation of pro- and anti-inflammatory eicosanoids: prostaglandins (PG), leukotrienes (LT) and lipoxins (LX). Catalyzes with high efficiency the reduction of the 13,14 double bond of 15-oxoPGs, including 15-oxo-PGE1, 15-oxo-PGE2, 15-oxo-PGF1-alpha and 15-oxo-PGF2-alpha. Catalyzes with lower efficiency the oxidation of the hydroxyl group at C12 of LTB4 and its derivatives, converting them into biologically less active 12-oxo-LTB4 metabolites. Reduces 15-oxo-LXA4 to 13,14 dihydro-15-oxo-LXA4, enhancing neutrophil recruitment at the inflammatory site. Plays a role in metabolic detoxification of alkenals and ketones. Reduces alpha,beta-unsaturated alkenals and ketones, particularly those with medium-chain length, showing highest affinity toward (2E)-decenal and (3E)-3-nonen-2-one. May inactivate 4-hydroxy-2-nonenal, a cytotoxic lipid constituent of oxidized low-density lipoprotein particles. This Bos taurus (Bovine) protein is Prostaglandin reductase 1 (PTGR1).